The primary structure comprises 28 residues: uncharacterized protein (28 aa).

The span at 1–18 (MLPRKYKPAYKKQAHRVK) shows a compositional bias: basic residues. Positions 1–28 (MLPRKYKPAYKKQAHRVKSNPQPAYTFQ) are disordered. Residues 19–28 (SNPQPAYTFQ) are compositionally biased toward polar residues.

This is an uncharacterized protein from Saccharomyces cerevisiae (strain ATCC 204508 / S288c) (Baker's yeast).